The chain runs to 37 residues: Large ribosomal subunit protein bL36c (37 aa).

It belongs to the bacterial ribosomal protein bL36 family.

Its subcellular location is the plastid. The protein resides in the chloroplast. The polypeptide is Large ribosomal subunit protein bL36c (Tetradesmus obliquus (Green alga)).